Consider the following 118-residue polypeptide: Large ribosomal subunit protein bL20 (118 aa).

This sequence belongs to the bacterial ribosomal protein bL20 family.

Binds directly to 23S ribosomal RNA and is necessary for the in vitro assembly process of the 50S ribosomal subunit. It is not involved in the protein synthesizing functions of that subunit. This chain is Large ribosomal subunit protein bL20 (rplT), found in Buchnera aphidicola subsp. Acyrthosiphon pisum (strain APS) (Acyrthosiphon pisum symbiotic bacterium).